The sequence spans 874 residues: MSERGDDDRTTSTINSLAKRRYQDNLDTFQEERAGFQQKRPHAVDDEDEDFETAAPPTKQKTKAEEMMERMGYKAGEGLGKNKQGIQEPVALSTQRGKTGLGHEGAKAVARDMNEQWDDSTENKTVEETVIWMTDIDEGIRREICDKLIKDDQWMVVRKEKKVIDDETEFCSEKELKDMIEAKNVFDSMSDKDLREARTRANPYETIGSAFFQNRAAMKTANMDKIYDWILSRENTGNNSFLLKNPLQEGTTAENVDRHEDLFYFADVCAGPGGFSEYMLWRKAFYNAKGFGFTLAGKDDFKLQKFTASSAYFFETFYGTKKNGDVMDPENIDSLEKFISEGTDGQGVHLMMADGGFSVEGQENIQEILSKRLYLCQLLVSLCIVREGGNFFCKLFDIFTPFSVGLIYLMRVCYDSISLHKPHTSRPANSERYITCKGLRKEFAGVVKDYLKRVNRKLDELKNKNSKDDVMELMPLDVIKSDEQFMKEIIEHNEVLAHRQTVYLQKYKSFAKNQGQFDKDQGNLRDECLKYWQVPNKQRPRGGDRGSRNGNQERLNPNVVLGKYTSKICGEAELGISFRGLGAASDPQLLIGTGDAVFIYRHGHFEQIDRDYARIPENTILLVDCAEEVKTDGSKIRISSDPHMIRIADAAVLYGDNVSQLPYEARMKAAQKFALALKLTKKTIQIGWGFRAKDITPHQVCCAQTYSLKELDEFQSNLIELKQRGEVIVLFKEGDRQFKTQSLRLTRIIKQDWQMGWSKSQQVPYVHSPLHQKEGSILEDQWKKREIHSSFWDSVILTNKDKQKMTEMMQHGHNAVPSTIWSWKPCMRTEYGPYKIMNHPEAFDGKPTISAIKSQIAETDLSTLRSKYTPLTAL.

Residues 1–10 are compositionally biased toward basic and acidic residues; the sequence is MSERGDDDRT. The interval 1-64 is disordered; that stretch reads MSERGDDDRT…APPTKQKTKA (64 aa). The G-patch domain maps to 60 to 106; sequence QKTKAEEMMERMGYKAGEGLGKNKQGIQEPVALSTQRGKTGLGHEGA. The region spanning 211-440 is the RrmJ-type SAM-dependent 2'-O-MTase domain; that stretch reads FFQNRAAMKT…ERYITCKGLR (230 aa). S-adenosyl-L-methionine contacts are provided by Gly273 and Asp354. Catalysis depends on Lys394, which acts as the Proton acceptor. The tract at residues 535-555 is disordered; it reads PNKQRPRGGDRGSRNGNQERL.

It carries out the reaction a 5'-end (N(7)-methyl 5'-triphosphoguanosine)-ribonucleoside in mRNA + S-adenosyl-L-methionine = a 5'-end (N(7)-methyl 5'-triphosphoguanosine)-(2'-O-methyl-ribonucleoside) in mRNA + S-adenosyl-L-homocysteine + H(+). Functionally, S-adenosyl-L-methionine-dependent methyltransferase that mediates mRNA cap1 2'-O-ribose methylation to the 5'-cap structure of mRNAs. Methylates the ribose of the first nucleotide of a m(7)GpppG-capped mRNA to produce m(7)GpppNmp (cap1). Cap1 modification is linked to higher levels of translation. The protein is Cap-specific mRNA (nucleoside-2'-O-)-methyltransferase 1A of Caenorhabditis briggsae.